Reading from the N-terminus, the 471-residue chain is GTPase Der (471 aa).

EngA-type G domains lie at 5-168 (PVIA…TDLE) and 186-359 (IRVA…DSAF). GTP-binding positions include 11–18 (GRPNVGKS), 58–62 (DTGGI), 120–123 (NKTD), 192–199 (GRPNVGKS), 239–243 (DTAGV), and 304–307 (NKWD). Residues 360–444 (IKIGTNELTR…PIRLEFKSGT (85 aa)) enclose the KH-like domain.

The protein belongs to the TRAFAC class TrmE-Era-EngA-EngB-Septin-like GTPase superfamily. EngA (Der) GTPase family. In terms of assembly, associates with the 50S ribosomal subunit.

Its function is as follows. GTPase that plays an essential role in the late steps of ribosome biogenesis. This Alcanivorax borkumensis (strain ATCC 700651 / DSM 11573 / NCIMB 13689 / SK2) protein is GTPase Der.